The sequence spans 137 residues: Large ribosomal subunit protein uL16c (137 aa).

Positions 1–21 (MLSPKRTKFRRHHRGRMKGKA) are disordered.

The protein belongs to the universal ribosomal protein uL16 family. In terms of assembly, part of the 50S ribosomal subunit.

The protein localises to the plastid. The protein resides in the chloroplast. This Tupiella akineta (Green alga) protein is Large ribosomal subunit protein uL16c.